The following is a 230-amino-acid chain: Claudin-2 (230 aa).

Topologically, residues 1 to 7 are cytoplasmic; it reads MASLGLQ. A helical transmembrane segment spans residues 8–28; it reads LVGYVLGLLGLLGTVIAMLLP. The Extracellular segment spans residues 29 to 81; the sequence is SWRTSSYVGASIVTAVGFSKGLWMECATHSTGITQCDIYSTMLGLPADIQAAQ. A disulfide bridge connects residues C54 and C64. A helical membrane pass occupies residues 82–102; sequence AMMVTSSAMSSLACIVSVVGM. Residues 103-116 are Cytoplasmic-facing; sequence RCTVFFQESRAKDR. Residues 117–137 traverse the membrane as a helical segment; it reads VAVVGGVFFILGGLLGFIPVA. Over 138–162 the chain is Extracellular; that stretch reads WNLHGILRDFYSPLVPDSMKFEIGE. Residues 163-183 form a helical membrane-spanning segment; that stretch reads ALYLGIISSLFSLIAGIFLCF. Topologically, residues 184–230 are cytoplasmic; it reads SCSPQGNRSNYYDAYQAQPLATRSSPRPGQAPKGKSEFNSYSLTGYV. Residues 205 to 230 form a disordered region; the sequence is TRSSPRPGQAPKGKSEFNSYSLTGYV. A Glycyl lysine isopeptide (Lys-Gly) (interchain with G-Cter in SUMO) cross-link involves residue K218. Residues S219 and S223 each carry the phosphoserine modification. A compositionally biased stretch (polar residues) spans 220–230; it reads EFNSYSLTGYV. The segment at 229 to 230 is interaction with TJP1, TJP2 and TJP3; the sequence is YV.

Belongs to the claudin family. Can form homo- and heteropolymers with other claudins to mediate paracellular barrier and channel functions of tight junctions in response to physiological stimuli. Homopolymers interact with CLDN3, but not CLDN1, homopolymers. Directly interacts with TJP1/ZO-1, TJP2/ZO-2 and TJP3/ZO-3. The disulfide bond is necessary for pore formation, but is not required for correct protein trafficking.

The protein localises to the cell junction. The protein resides in the tight junction. It localises to the cell membrane. The enzyme catalyses Na(+)(in) = Na(+)(out). The catalysed reaction is K(+)(in) = K(+)(out). It catalyses the reaction Rb(+)(in) = Rb(+)(out). It carries out the reaction Li(+)(in) = Li(+)(out). The enzyme catalyses Cs(+)(in) = Cs(+)(out). The catalysed reaction is Ca(2+)(in) = Ca(2+)(out). It catalyses the reaction methylamine(out) = methylamine(in). It carries out the reaction choline(out) = choline(in). The enzyme catalyses H2O(in) = H2O(out). Its function is as follows. Forms paracellular channels: polymerizes in tight junction strands with cation- and water-selective channels through the strands, conveying epithelial permeability in a process known as paracellular tight junction permeability. In intestinal epithelium, allows for sodium and water fluxes from the peritoneal side to the lumen of the intestine to regulate nutrient absorption and clear enteric pathogens as part of mucosal immune response. In kidney, allows passive sodium and calcium reabsorption across proximal tubules from the lumen back to the bloodstream. In the hepatobiliary tract, allows paracellular water and cation fluxes in the hepatic perivenous areas and biliary epithelium to generate bile flow and maintain osmotic gradients. This Bos taurus (Bovine) protein is Claudin-2 (CLDN2).